An 848-amino-acid chain; its full sequence is Leucine--tRNA ligase (848 aa).

Residues 1-16 (MCPEQPHDTRAERDEM) show a composition bias toward basic and acidic residues. A disordered region spans residues 1–30 (MCPEQPHDTRAERDEMSEQTQQAAQPAETA). Over residues 18–30 (EQTQQAAQPAETA) the composition is skewed to low complexity. The 'HIGH' region signature appears at 69-79 (PYPSGDLHMGH). The short motif at 614-618 (KMSKS) is the 'KMSKS' region element. Lys-617 contributes to the ATP binding site.

The protein belongs to the class-I aminoacyl-tRNA synthetase family.

It localises to the cytoplasm. The enzyme catalyses tRNA(Leu) + L-leucine + ATP = L-leucyl-tRNA(Leu) + AMP + diphosphate. The polypeptide is Leucine--tRNA ligase (Nocardioides sp. (strain ATCC BAA-499 / JS614)).